The following is a 251-amino-acid chain: Probable transcriptional regulatory protein DehaBAV1_0421 (251 aa).

The protein belongs to the TACO1 family.

Its subcellular location is the cytoplasm. The chain is Probable transcriptional regulatory protein DehaBAV1_0421 from Dehalococcoides mccartyi (strain ATCC BAA-2100 / JCM 16839 / KCTC 5957 / BAV1).